A 305-amino-acid chain; its full sequence is tRNA dimethylallyltransferase (305 aa).

Residue 9–16 (GPTAVGKT) coordinates ATP. 11-16 (TAVGKT) contributes to the substrate binding site. The interaction with substrate tRNA stretch occupies residues 34-37 (DSRQ).

This sequence belongs to the IPP transferase family. Monomer. It depends on Mg(2+) as a cofactor.

The enzyme catalyses adenosine(37) in tRNA + dimethylallyl diphosphate = N(6)-dimethylallyladenosine(37) in tRNA + diphosphate. Functionally, catalyzes the transfer of a dimethylallyl group onto the adenine at position 37 in tRNAs that read codons beginning with uridine, leading to the formation of N6-(dimethylallyl)adenosine (i(6)A). The sequence is that of tRNA dimethylallyltransferase from Roseiflexus sp. (strain RS-1).